Reading from the N-terminus, the 454-residue chain is Inner membrane permease YgbN (454 aa).

Position 1 (methionine 1) is a topological domain, periplasmic. The chain crosses the membrane as a helical span at residues 2–22 (STITLLCIALAGVIMLLLLVI). Topologically, residues 23-27 (KAKVQ) are cytoplasmic. The helical transmembrane segment at 28 to 48 (PFVALLLVSLLVALAAGIPAG) threads the bilayer. Over 49-52 (EVGK) the chain is Periplasmic. The chain crosses the membrane as a helical span at residues 53–73 (VMIAGMGGVLGSVTIIIGLGA). The Cytoplasmic segment spans residues 74–108 (MLGRMIEHSGGAESLANYFSRKLGDKRTIAALTLA). A helical transmembrane segment spans residues 109-129 (AFFLGIPVFFDVGFIILAPII). The Periplasmic portion of the chain corresponds to 130 to 137 (YGFAKVAK). Residues 138–158 (ISPLKFGLPVAGIMLTVHVAV) form a helical membrane-spanning segment. Topologically, residues 159 to 174 (PPHPGPVAAAGLLHAD) are cytoplasmic. Residues 175-195 (IGWLTIIGIAISIPVGVVGYF) form a helical membrane-spanning segment. Over 196 to 235 (AAKIINKRQYAMSVEVLEQMQLAPASEEGATKLSDKINPP) the chain is Periplasmic. Residues 236 to 256 (GVALVTSLIVIPIAIIMAGTV) form a helical membrane-spanning segment. Topologically, residues 257–273 (SATLMPPSHPLLGTLQL) are cytoplasmic. Residues 274–294 (IGSPMVALMIALVLAFWLLAL) form a helical membrane-spanning segment. Residues 295 to 305 (RRGWSLQHTSD) are Periplasmic-facing. Residues 306 to 326 (IMGSALPTAAVVILVTGAGGV) traverse the membrane as a helical segment. Over 327–341 (FGKVLVESGVGKALA) the chain is Cytoplasmic. Residues 342–362 (NMLQMIDLPLLPAAFIISLAL) traverse the membrane as a helical segment. At 363–383 (RASQGSATVAILTTGGLLSEA) the chain is on the periplasmic side. The chain crosses the membrane as a helical span at residues 384–404 (VMGLNPIQCVLVTLAACFGGL). Topologically, residues 405-433 (GASHINDSGFWIVTKYLGLSVADGLKTWT) are cytoplasmic. The helical transmembrane segment at 434-454 (VLTTILGFTGFLITWCVWAVI) threads the bilayer.

The protein belongs to the GntP permease family.

The protein resides in the cell inner membrane. The chain is Inner membrane permease YgbN (ygbN) from Escherichia coli (strain K12).